Reading from the N-terminus, the 590-residue chain is Transcription factor GTE7 (590 aa).

Residues 125 to 160 (LNNFTGEKNDLGPKKKKQKKNVSGLKRSNQFGPSDP) are disordered. The Bromo domain occupies 164–270 (KLLAGMLNTC…DHFDGMFNPA (107 aa)). 2 disordered regions span residues 282-400 (TGSS…KDPN) and 476-590 (RQGF…EAQC). Positions 288–298 (PEPDFKPDFKQ) are enriched in basic and acidic residues. A compositionally biased stretch (pro residues) spans 347–369 (PSPPPPPPVIQPELPQPQPPPPQ). The 82-residue stretch at 394–475 (PKAKDPNKRL…NYKKMASKIK (82 aa)) folds into the NET domain. Residues 498–508 (SAEKRTRRGDA) show a composition bias toward basic and acidic residues. Over residues 509-521 (GEEDVDIGEDIPI) the composition is skewed to acidic residues. The segment covering 537-562 (AAAASSGSSSSGSSSSSGGSSSSSDS) has biased composition (low complexity).

The protein resides in the nucleus. This chain is Transcription factor GTE7 (GTE7), found in Arabidopsis thaliana (Mouse-ear cress).